Consider the following 166-residue polypeptide: Ribonuclease H (166 aa).

An RNase H type-1 domain is found at 5–147 (PRKRVALFTD…VDREARRQAQ (143 aa)). The Mg(2+) site is built by Asp14, Glu52, Asp74, and Asp139. Residues 128 to 166 (GHTGHPENERVDREARRQAQSQAKTPCPPQAPTLFHEEA) are disordered. Basic and acidic residues predominate over residues 131–144 (GHPENERVDREARR).

It belongs to the RNase H family. In terms of assembly, monomer. Requires Mg(2+) as cofactor.

Its subcellular location is the cytoplasm. It catalyses the reaction Endonucleolytic cleavage to 5'-phosphomonoester.. Functionally, endonuclease that specifically degrades the RNA of RNA-DNA hybrids. This Thermus thermophilus (strain ATCC BAA-163 / DSM 7039 / HB27) protein is Ribonuclease H.